The sequence spans 557 residues: Urocanate hydratase (557 aa).

Residues 48–49 (GG), Gln-126, 178–180 (GMG), Asp-198, Arg-203, 244–245 (NA), 265–269 (QTSAH), 274–275 (YL), and Tyr-323 contribute to the NAD(+) site. The active site involves Cys-411. Gly-493 is a binding site for NAD(+).

This sequence belongs to the urocanase family. The cofactor is NAD(+).

The protein localises to the cytoplasm. The enzyme catalyses 4-imidazolone-5-propanoate = trans-urocanate + H2O. Its pathway is amino-acid degradation; L-histidine degradation into L-glutamate; N-formimidoyl-L-glutamate from L-histidine: step 2/3. Catalyzes the conversion of urocanate to 4-imidazolone-5-propionate. This Beutenbergia cavernae (strain ATCC BAA-8 / DSM 12333 / CCUG 43141 / JCM 11478 / NBRC 16432 / NCIMB 13614 / HKI 0122) protein is Urocanate hydratase.